Reading from the N-terminus, the 316-residue chain is Tyrosine recombinase XerD (316 aa).

The region spanning Ala4–Val97 is the Core-binding (CB) domain. Positions Arg118 to Ala309 constitute a Tyr recombinase domain. Catalysis depends on residues Arg162, Lys186, His261, Arg264, and His287. Tyr296 acts as the O-(3'-phospho-DNA)-tyrosine intermediate in catalysis.

This sequence belongs to the 'phage' integrase family. XerD subfamily. As to quaternary structure, forms a cyclic heterotetrameric complex composed of two molecules of XerC and two molecules of XerD.

It localises to the cytoplasm. In terms of biological role, site-specific tyrosine recombinase, which acts by catalyzing the cutting and rejoining of the recombining DNA molecules. The XerC-XerD complex is essential to convert dimers of the bacterial chromosome into monomers to permit their segregation at cell division. It also contributes to the segregational stability of plasmids. This chain is Tyrosine recombinase XerD, found in Mycobacterium leprae (strain TN).